A 348-amino-acid polypeptide reads, in one-letter code: Keratocan (348 aa).

An N-terminal signal peptide occupies residues 1–26; the sequence is MSRLNLTMEVLLVAFVAVFLTSQVHS. The region spanning 40–69 is the LRRNT domain; the sequence is ACPKECNCPPNFPNAVYCDNKGLKSIPVIP. 2 cysteine pairs are disulfide-bonded: Cys41–Cys47 and Cys45–Cys57. LRR repeat units follow at residues 70–92, 93–118, 119–140, 141–163, 165–189, 190–213, 215–234, 235–260, 262–280, and 281–303; these read PYTWYLYLQNNLIDVLSANALRN, ATQLKWINLNRNKITTEGLEVDALRA, MSNLVHLYMEDNLLSSIPSPLP, AKLEQLRLSRNKISKIPPGVFSG, GHLTLLDLQSNKLQDDAVTEVSLKG, LNNLIQINLAKNQLNSMPLGLPPT, TQIFLDGNNIEKIPAEYFKG, LPKVASLRLNRNKLANGGIPKNVFNL, SILDLQLSHNQLTEVPVIS, and SGLEHLHLDHNKIKSVNSSDICP. Asn92 is a glycosylation site (N-linked (GlcNAc...) (keratan sulfate) asparagine). A glycan (N-linked (GlcNAc...) (keratan sulfate) asparagine) is linked at Asn259. N-linked (GlcNAc...) asparagine glycosylation is present at Asn297. Residues Cys302 and Cys339 are joined by a disulfide bond.

Belongs to the small leucine-rich proteoglycan (SLRP) family. SLRP class II subfamily. Post-translationally, glycosylated. Contains keratan sulfate chains. Expressed in eye, where it is found in the corneal epithelial layer and to a lesser extent in the stromal layer (at protein level).

The protein resides in the secreted. The protein localises to the extracellular space. It localises to the extracellular matrix. May be important in developing and maintaining corneal transparency and for the structure of the stromal matrix. This chain is Keratocan, found in Danio rerio (Zebrafish).